The chain runs to 289 residues: Ribosomal RNA small subunit methyltransferase H (289 aa).

S-adenosyl-L-methionine-binding positions include 40-42 (GGH), Asp60, Phe84, Asp106, and Gln113.

This sequence belongs to the methyltransferase superfamily. RsmH family.

It is found in the cytoplasm. The catalysed reaction is cytidine(1402) in 16S rRNA + S-adenosyl-L-methionine = N(4)-methylcytidine(1402) in 16S rRNA + S-adenosyl-L-homocysteine + H(+). Specifically methylates the N4 position of cytidine in position 1402 (C1402) of 16S rRNA. This chain is Ribosomal RNA small subunit methyltransferase H, found in Haemophilus influenzae (strain PittGG).